A 108-amino-acid chain; its full sequence is UPF0060 membrane protein YnfA (108 aa).

Over 1 to 5 (MLKTT) the chain is Periplasmic. Residues 6–26 (LLFFVTALCEIIGCFLPWLWL) form a helical membrane-spanning segment. Residues 27–30 (KRGA) lie on the Cytoplasmic side of the membrane. A helical transmembrane segment spans residues 31-51 (SMWWLLPAAASLALFVWLLTL). Topologically, residues 52–60 (HPAASGRVY) are periplasmic. The helical transmembrane segment at 61–81 (AAYGGVYVCTALLWLRVVDGV) threads the bilayer. Residues 82-84 (RLT) lie on the Cytoplasmic side of the membrane. Residues 85 to 105 (VYDWCGALIALCGMLIIVVGW) form a helical membrane-spanning segment. Residues 106–108 (GRT) are Periplasmic-facing.

The protein belongs to the UPF0060 family.

It localises to the cell inner membrane. The sequence is that of UPF0060 membrane protein YnfA from Salmonella schwarzengrund (strain CVM19633).